The sequence spans 98 residues: NADH-ubiquinone oxidoreductase chain 4L (98 aa).

Transmembrane regions (helical) follow at residues 1–21 (MSLVYMNIMMAFTVSLTGLLM), 29–49 (SLLCLEGMMLSLFILATLMIL), and 61–81 (IILLVFAACEAALGLSLLVMV).

It belongs to the complex I subunit 4L family. Core subunit of respiratory chain NADH dehydrogenase (Complex I) which is composed of 45 different subunits.

It is found in the mitochondrion inner membrane. It carries out the reaction a ubiquinone + NADH + 5 H(+)(in) = a ubiquinol + NAD(+) + 4 H(+)(out). In terms of biological role, core subunit of the mitochondrial membrane respiratory chain NADH dehydrogenase (Complex I) which catalyzes electron transfer from NADH through the respiratory chain, using ubiquinone as an electron acceptor. Part of the enzyme membrane arm which is embedded in the lipid bilayer and involved in proton translocation. This is NADH-ubiquinone oxidoreductase chain 4L (MT-ND4L) from Ovis aries (Sheep).